The following is a 72-amino-acid chain: UPF0352 protein SO_2176 (72 aa).

The protein belongs to the UPF0352 family.

The chain is UPF0352 protein SO_2176 from Shewanella oneidensis (strain ATCC 700550 / JCM 31522 / CIP 106686 / LMG 19005 / NCIMB 14063 / MR-1).